The chain runs to 485 residues: Glycogen synthase (485 aa).

Position 15 (lysine 15) interacts with ADP-alpha-D-glucose.

This sequence belongs to the glycosyltransferase 1 family. Bacterial/plant glycogen synthase subfamily.

It catalyses the reaction [(1-&gt;4)-alpha-D-glucosyl](n) + ADP-alpha-D-glucose = [(1-&gt;4)-alpha-D-glucosyl](n+1) + ADP + H(+). Its pathway is glycan biosynthesis; glycogen biosynthesis. Synthesizes alpha-1,4-glucan chains using ADP-glucose. In Fervidobacterium nodosum (strain ATCC 35602 / DSM 5306 / Rt17-B1), this protein is Glycogen synthase.